A 127-amino-acid chain; its full sequence is uncharacterized protein (127 aa).

Residues 1-24 (PLKTKPIDNNLPHRTGYNQASKQQ) form a disordered region.

This is an uncharacterized protein from Homo sapiens (Human).